The sequence spans 1452 residues: Receptor-type tyrosine-protein phosphatase mu (1452 aa).

Positions Met1–Gly20 are cleaved as a signal peptide. The Extracellular portion of the chain corresponds to Glu21 to Lys742. The MAM domain occupies Thr22 to Arg184. A disulfide bond links Cys27 and Cys36. Residues Asn72, Asn92, Asn131, and Asn249 are each glycosylated (N-linked (GlcNAc...) asparagine). 2 disulfide bridges follow: Cys96/Cys182 and Cys206/Cys260. In terms of domain architecture, Ig-like C2-type spans Pro186–Val277. 4 consecutive Fibronectin type-III domains span residues Pro284–Pro379, Gly382–Asp480, Leu481–Ser587, and Pro589–Gln671. N-linked (GlcNAc...) asparagine glycans are attached at residues Asn406, Asn414, Asn454, Asn534, Asn544, Asn598, Asn651, and Asn681. The chain crosses the membrane as a helical span at residues Ile743–Met764. The Cytoplasmic portion of the chain corresponds to Lys765–Gly1452. Ser821 carries the phosphoserine modification. 2 consecutive Tyrosine-protein phosphatase domains span residues Phe900 to Ala1154 and Ile1186 to Tyr1448. Residues Asp1063, Cys1095–Arg1101, and Gln1139 each bind substrate. Cys1095 serves as the catalytic Phosphocysteine intermediate. Catalysis depends on Cys1389, which acts as the Phosphocysteine intermediate.

It belongs to the protein-tyrosine phosphatase family. Receptor class 2B subfamily. In terms of assembly, homodimer. In terms of tissue distribution, most abundant in lung, less in brain and heart.

It localises to the cell membrane. It catalyses the reaction O-phospho-L-tyrosyl-[protein] + H2O = L-tyrosyl-[protein] + phosphate. Functionally, receptor protein-tyrosine phosphatase that mediates homotypic cell-cell interactions and plays a role in adipogenic differentiation via modulation of p120 catenin/CTNND1 phosphorylation. Promotes CTNND1 dephosphorylation and prevents its cytoplasmic localization where it inhibits SLC2A4 membrane trafficking. In turn, SLC2A4 is directed to the plasma membrane and performs its glucose transporter function. The sequence is that of Receptor-type tyrosine-protein phosphatase mu (Ptprm) from Mus musculus (Mouse).